Consider the following 184-residue polypeptide: ATP synthase subunit b (184 aa).

A helical transmembrane segment spans residues 15-34; it reads VQPGLIFWTLVTFVIAAVVL.

It belongs to the ATPase B chain family. In terms of assembly, F-type ATPases have 2 components, F(1) - the catalytic core - and F(0) - the membrane proton channel. F(1) has five subunits: alpha(3), beta(3), gamma(1), delta(1), epsilon(1). F(0) has three main subunits: a(1), b(2) and c(10-14). The alpha and beta chains form an alternating ring which encloses part of the gamma chain. F(1) is attached to F(0) by a central stalk formed by the gamma and epsilon chains, while a peripheral stalk is formed by the delta and b chains.

The protein resides in the cell inner membrane. In terms of biological role, f(1)F(0) ATP synthase produces ATP from ADP in the presence of a proton or sodium gradient. F-type ATPases consist of two structural domains, F(1) containing the extramembraneous catalytic core and F(0) containing the membrane proton channel, linked together by a central stalk and a peripheral stalk. During catalysis, ATP synthesis in the catalytic domain of F(1) is coupled via a rotary mechanism of the central stalk subunits to proton translocation. Its function is as follows. Component of the F(0) channel, it forms part of the peripheral stalk, linking F(1) to F(0). This chain is ATP synthase subunit b, found in Myxococcus xanthus (strain DK1622).